Reading from the N-terminus, the 163-residue chain is Photosystem II extrinsic protein V (163 aa).

Residues 1 to 26 form the signal peptide; that stretch reads MFRRLIGVVVATVLLSFQLLVGSATA. Heme c is bound by residues Cys-63, Cys-66, His-67, and His-118.

It belongs to the cytochrome c family. PsbV subfamily. PSII is composed of 1 copy each of membrane proteins PsbA, PsbB, PsbC, PsbD, PsbE, PsbF, PsbH, PsbI, PsbJ, PsbK, PsbL, PsbM, PsbT, PsbX, PsbY, PsbZ, Psb30/Ycf12, peripheral proteins PsbO, CyanoQ (PsbQ), PsbU, PsbV and a large number of cofactors. It forms dimeric complexes. Requires heme c as cofactor.

It is found in the cellular thylakoid membrane. One of the extrinsic, lumenal subunits of photosystem II (PSII). PSII is a light-driven water plastoquinone oxidoreductase, using light energy to abstract electrons from H(2)O, generating a proton gradient subsequently used for ATP formation. The extrinsic proteins stabilize the structure of photosystem II oxygen-evolving complex (OEC), the ion environment of oxygen evolution and protect the OEC against heat-induced inactivation. Low-potential cytochrome c that plays a role in the OEC of PSII. The chain is Photosystem II extrinsic protein V from Nostoc punctiforme (strain ATCC 29133 / PCC 73102).